Here is a 186-residue protein sequence, read N- to C-terminus: CRS2-like protein, chloroplastic (186 aa).

A chloroplast-targeting transit peptide spans 1-49 (MAMTAASVFGSGGCLELLTSSKAMRGKLWTRLAPFISKRHASTSQTSLS). Y73 lines the tRNA pocket. The active-site Proton acceptor is H78. Residues Y123, N125, and N171 each contribute to the tRNA site.

It belongs to the PTH family.

The protein resides in the plastid. It localises to the chloroplast. This is CRS2-like protein, chloroplastic from Oryza sativa subsp. japonica (Rice).